The primary structure comprises 346 residues: MAHHPRWTLSQVTELFNKPLLDLLFDAQQIHRQHFDPQQVQVSTLLSIKTGACPEDCKYCPQSSRYKTGLEAERLMEVEQVLDSARKAKNAGSTRFCMGAAWKNPHERDMPYLEQMVQGVKAMGLEACMTLGTLNESQAQRLANAGLDYYNHNLDTSPEFYGNIITTRSYQERLDTLDKVREAGIKVCSGGIVGLGETVKDRAGLLLQLANLPTPPESVPINMLVKVKGTPLADNEDVDAFDFIRTIAVARIMMPTSYVRLSAGREQMNEQTQAMCFMAGANSIFYGCKLLTTPNPEEDKDLQLFRKLGLNPQQTSVLAGDNEQQQRLEQALMTPDTDDYYNAAAV.

The region spanning 38 to 256 (QQVQVSTLLS…IAVARIMMPT (219 aa)) is the Radical SAM core domain. Residues C53, C57, and C60 each contribute to the [4Fe-4S] cluster site. C97, C128, C188, and R260 together coordinate [2Fe-2S] cluster.

The protein belongs to the radical SAM superfamily. Biotin synthase family. In terms of assembly, homodimer. [4Fe-4S] cluster is required as a cofactor. It depends on [2Fe-2S] cluster as a cofactor.

The catalysed reaction is (4R,5S)-dethiobiotin + (sulfur carrier)-SH + 2 reduced [2Fe-2S]-[ferredoxin] + 2 S-adenosyl-L-methionine = (sulfur carrier)-H + biotin + 2 5'-deoxyadenosine + 2 L-methionine + 2 oxidized [2Fe-2S]-[ferredoxin]. Its pathway is cofactor biosynthesis; biotin biosynthesis; biotin from 7,8-diaminononanoate: step 2/2. Catalyzes the conversion of dethiobiotin (DTB) to biotin by the insertion of a sulfur atom into dethiobiotin via a radical-based mechanism. In Citrobacter koseri (strain ATCC BAA-895 / CDC 4225-83 / SGSC4696), this protein is Biotin synthase.